A 474-amino-acid polypeptide reads, in one-letter code: Glutamate--tRNA ligase (474 aa).

The 'HIGH' region motif lies at 10-20 (PSPTGYLHIGG). Zn(2+) is bound by residues Cys107, Cys109, Cys134, and Asp136. Residues 244–248 (RLSKR) carry the 'KMSKS' region motif. Lys247 is a binding site for ATP.

Belongs to the class-I aminoacyl-tRNA synthetase family. Glutamate--tRNA ligase type 1 subfamily. Monomer. Zn(2+) is required as a cofactor.

The protein resides in the cytoplasm. It catalyses the reaction tRNA(Glu) + L-glutamate + ATP = L-glutamyl-tRNA(Glu) + AMP + diphosphate. Catalyzes the attachment of glutamate to tRNA(Glu) in a two-step reaction: glutamate is first activated by ATP to form Glu-AMP and then transferred to the acceptor end of tRNA(Glu). The sequence is that of Glutamate--tRNA ligase from Anaeromyxobacter dehalogenans (strain 2CP-C).